The primary structure comprises 76 residues: uncharacterized protein (76 aa).

The segment at 36-41 is required for interaction with PPP3CA; it reads PDIIIT. Phosphothreonine is present on residues Thr44 and Thr46.

In terms of assembly, interacts (via PxIxIT motif, when phosphorylated on Thr-44) with PPP3CA. In terms of tissue distribution, not expressed in pancreatic duct cells (at protein level). Abundantly expressed in the pancreas and weakly expressed in the thyroid. As to expression, not expressed in pancreatic duct cells (at protein level). Abundantly expressed in the lymph node and weakly expressed in the stomach, trachea and bone marrow.

This is an uncharacterized protein from Homo sapiens (Human).